A 209-amino-acid polypeptide reads, in one-letter code: Ribonuclease HII (209 aa).

One can recognise an RNase H type-2 domain in the interval 19–209 (CIIVGVDEVG…LPGITKLYSK (191 aa)). Residues aspartate 25, glutamate 26, and aspartate 118 each contribute to the a divalent metal cation site.

It belongs to the RNase HII family. Requires Mn(2+) as cofactor. The cofactor is Mg(2+).

The protein resides in the cytoplasm. The enzyme catalyses Endonucleolytic cleavage to 5'-phosphomonoester.. In terms of biological role, endonuclease that specifically degrades the RNA of RNA-DNA hybrids. The chain is Ribonuclease HII from Ehrlichia canis (strain Jake).